The primary structure comprises 246 residues: FAD synthetase (246 aa).

This sequence belongs to the RibF family.

It catalyses the reaction FMN + ATP + H(+) = FAD + diphosphate. Its pathway is cofactor biosynthesis; FAD biosynthesis; FAD from FMN: step 1/1. Its function is as follows. Catalyzes the adenylation of flavin mononucleotide (FMN) to form flavin adenine dinucleotide (FAD) coenzyme. Can also catalyze, with lower efficiency, the adenylation of the toxic riboflavin analogs 8-demethyl-8-aminoriboflavin mononucleotide (AFMN) and roseoflavin mononucleotide (RoFMN) to 8-demethyl-8-aminoriboflavin adenine dinucleotide (AFAD) and roseoflavin adenine dinucleotide (RoFAD), respectively. The polypeptide is FAD synthetase (Listeria monocytogenes serovar 1/2a (strain ATCC BAA-679 / EGD-e)).